A 233-amino-acid polypeptide reads, in one-letter code: Small ribosomal subunit protein uS2 (233 aa).

It belongs to the universal ribosomal protein uS2 family.

The polypeptide is Small ribosomal subunit protein uS2 (Clostridium acetobutylicum (strain ATCC 824 / DSM 792 / JCM 1419 / IAM 19013 / LMG 5710 / NBRC 13948 / NRRL B-527 / VKM B-1787 / 2291 / W)).